Consider the following 1166-residue polypeptide: Poly [ADP-ribose] polymerase tankyrase-2 (1166 aa).

ANK repeat units follow at residues proline 23–arginine 52, arginine 57–alanine 86, glycine 90–alanine 119, and tryptophan 123–isoleucine 152. Asparagine 203 carries the post-translational modification (3S)-3-hydroxyasparagine; by HIF1AN. ANK repeat units follow at residues arginine 210–alanine 239, glycine 243–alanine 272, tryptophan 276–leucine 305, threonine 363–glutamate 395, glutamate 399–alanine 428, leucine 432–isoleucine 461, and serine 463–histidine 489. The residue at position 238 (histidine 238) is a (3S)-3-hydroxyhistidine; by HIF1AN. Asparagine 271 carries the (3S)-3-hydroxyasparagine; by HIF1AN modification. The residue at position 427 (asparagine 427) is a (3S)-3-hydroxyasparagine; by HIF1AN. Asparagine 518 carries the post-translational modification (3S)-3-hydroxyasparagine; by HIF1AN. ANK repeat units lie at residues arginine 525–alanine 554, glycine 558–valine 587, tryptophan 591–lysine 620, and aspartate 624–alanine 652. The interval leucine 545–histidine 553 is HIF1AN-binding. Histidine 553 is subject to (3S)-3-hydroxyhistidine; by HIF1AN. The residue at position 586 (asparagine 586) is a (3S)-3-hydroxyasparagine; by HIF1AN. Asparagine 671, asparagine 706, and asparagine 739 each carry (3S)-3-hydroxyasparagine; by HIF1AN. ANK repeat units follow at residues arginine 678–alanine 707, glycine 711–alanine 740, and tryptophan 744–leucine 773. Positions glycine 873 to glycine 936 constitute an SAM domain. The PARP catalytic domain maps to serine 959–valine 1164. Residues cysteine 1081, histidine 1084, cysteine 1089, and cysteine 1092 each coordinate Zn(2+).

Belongs to the ARTD/PARP family. In terms of assembly, oligomerizes and associates with TNKS. Interacts with the cytoplasmic domain of LNPEP/Otase in SLC2A4/GLUT4-vesicles. Binds to the N-terminus of Grb14 and TRF1 with its ankyrin repeat region. Interacts with HIF1AN. Interacts with RNF146; this interaction leads to ubiquitination and proteasomal degradation. Interacts with NUMA1. Post-translationally, ubiquitinated by RNF146 when auto-poly-ADP-ribosylated, leading to its degradation. Deubiquitinated by USP25; leading to stabilization. In terms of processing, ADP-ribosylated (-auto). Poly-ADP-ribosylated protein is recognized by RNF146, followed by ubiquitination.

It localises to the cytoplasm. The protein resides in the golgi apparatus membrane. It is found in the nucleus. The protein localises to the chromosome. Its subcellular location is the telomere. It catalyses the reaction NAD(+) + (ADP-D-ribosyl)n-acceptor = nicotinamide + (ADP-D-ribosyl)n+1-acceptor + H(+).. The enzyme catalyses L-aspartyl-[protein] + NAD(+) = 4-O-(ADP-D-ribosyl)-L-aspartyl-[protein] + nicotinamide. It carries out the reaction L-glutamyl-[protein] + NAD(+) = 5-O-(ADP-D-ribosyl)-L-glutamyl-[protein] + nicotinamide. In terms of biological role, poly-ADP-ribosyltransferase involved in various processes such as Wnt signaling pathway, telomere length and vesicle trafficking. Acts as an activator of the Wnt signaling pathway by mediating poly-ADP-ribosylation of AXIN1 and AXIN2, 2 key components of the beta-catenin destruction complex: poly-ADP-ribosylated target proteins are recognized by RNF146, which mediates their ubiquitination and subsequent degradation. Also mediates poly-ADP-ribosylation of BLZF1 and CASC3, followed by recruitment of RNF146 and subsequent ubiquitination. Mediates poly-ADP-ribosylation of TERF1, thereby contributing to the regulation of telomere length. Stimulates 26S proteasome activity. In Mus musculus (Mouse), this protein is Poly [ADP-ribose] polymerase tankyrase-2.